A 356-amino-acid polypeptide reads, in one-letter code: Leucoanthocyanidin dioxygenase (356 aa).

Tyr-142 and Lys-213 together coordinate substrate. Residues 208–307 (LLLQMKINYY…RISWAVFCEP (100 aa)) form the Fe2OG dioxygenase domain. 2-oxoglutarate is bound at residue 215-217 (NYY). Fe cation is bound at residue His-232. Position 233 (Thr-233) interacts with substrate. Residues Asp-234 and His-288 each contribute to the Fe cation site. 298 to 300 (RIS) is a 2-oxoglutarate binding site. Residues Glu-306 and Lys-341 each contribute to the substrate site.

Belongs to the iron/ascorbate-dependent oxidoreductase family. L-ascorbate is required as a cofactor. It depends on Fe(2+) as a cofactor. In terms of tissue distribution, expressed in young seedlings (at protein level).

The catalysed reaction is a (2R,3S,4S)-leucoanthocyanidin + 2-oxoglutarate + O2 = a 4-H-anthocyanidin with a 3-hydroxy group + succinate + CO2 + 2 H2O. It carries out the reaction (2R,3S,4S)-3,4-leucopelargonidin + 2-oxoglutarate + O2 = (4S)-2,3-dehydroleucopelargonidin + succinate + CO2 + H2O + H(+). The enzyme catalyses (2R,3S,4S)-leucocyanidin + 2-oxoglutarate + O2 = (4S)-2,3-dehydroleucocyanidin + succinate + CO2 + H2O + H(+). Its pathway is pigment biosynthesis; anthocyanin biosynthesis. Its function is as follows. Involved in anthocyanin and protoanthocyanidin biosynthesis by catalyzing the oxidation of leucoanthocyanidins into anthocyanidins. Possesses low flavonol synthase activity in vitro towards dihydrokaempferol and dihydroquercetin producing kaempferol and quercitin, respectively. The protein is Leucoanthocyanidin dioxygenase (LDOX) of Arabidopsis thaliana (Mouse-ear cress).